A 599-amino-acid chain; its full sequence is Crinkler effector protein 8 (599 aa).

Residues 1-17 (MVTLFCAVVGVAGSTFP) form the signal peptide. The interval 18 to 52 (VDINENKSVGHLKKAIKEEKMYQFPADELQLFLAK) is LQLFLAK domain. N-linked (GlcNAc...) asparagine glycosylation is present at N23. The tract at residues 53–109 (AGGNAWLSSLTEDVKKLKKGEKTALVKSLTQEEKELQGEDPISECLEGMDPPKVKQI) is DWL domain. Positions 110-116 (HVLVALP) match the HVLVXXP motif motif. The segment at 117–590 (PGTSSAPISD…EAAEQESQGK (474 aa)) is C-terminal D2 effector domain. A phosphoserine mark is found at S249, S281, and S385. In terms of domain architecture, Protein kinase spans 289–590 (LSKKLVWSYG…EAAEQESQGK (302 aa)). D470 (proton acceptor) is an active-site residue. Residues S474 and S587 each carry the phosphoserine modification. A disordered region spans residues 577–599 (RFEREAAEQESQGKGVRKKHRRA). The Host nuclear localization signal signature appears at 590 to 599 (KGVRKKHRRA).

In the N-terminal section; belongs to the Crinkler effector family. It in the C-terminal section; belongs to the protein kinase superfamily. In terms of assembly, dimerizes in host plants. In terms of processing, autophosphorylated at Ser-249, Ser-281, Ser-385, Ser-474 and Ser-587. Additional serines or threonines are also targeted for phosphorylation.

The protein resides in the secreted. The protein localises to the host nucleus. It catalyses the reaction L-seryl-[protein] + ATP = O-phospho-L-seryl-[protein] + ADP + H(+). The catalysed reaction is L-threonyl-[protein] + ATP = O-phospho-L-threonyl-[protein] + ADP + H(+). Functionally, secreted effector that induces cell death when expressed in host plants. Acts as a kinase and is able to autophosphorylate, however its cell death inducing ability is not a direct result of its kinase activity, but rather a consequence of the phosphorylated state of the five identified serine residues in the CRN8 protein. This chain is Crinkler effector protein 8, found in Phytophthora infestans (Potato late blight agent).